Reading from the N-terminus, the 520-residue chain is MQSRILDIHGNPFRFEADMQTESESRLMPLQYHYSDHPASGLTPAKAARILRAAEQGDLVAQAELAEDMEEKDTHILSELSKRRGAITAVDWQIKPPRNATPEEQRDAEMLQEILEDAVWLDDCIFDATDAILKGFSSQEIEWEQGLVGGLKLIKNVHWRDPAWFMTPAYQRNSLRLRDGTPEGAEMQQFGWVKHVARAKTGYLSRIGLVRTLVWPFIFKNYSVRDFAEFLEIYGLPLRLGKYPEGATDKEKQTLLRAVMSIGHNAGGIIPRGMELEFEKAADGSDSTFMAMIEWAEKSASKAILGGTLTSQADGATSTNALGNVHNDVRLEIRNADLKRLAATLTRDLVYPLYALNCKSFNDARRIPRFEFDVAESEDLNAFADGLNKLVDIGFRIPKQWAHDKLQVPIATENEEVLAKSFQNPTAYMHSKADGKMAVLSVQPDPEDLLDNLEPTAEDYQAVIDPLLKPVVEALQKGGYEFAQEKLAILYAEMNDEELETLLTRAIFVSDLLGRANAKR.

The protein to phage Mu protein gp29.

In Haemophilus influenzae (strain ATCC 51907 / DSM 11121 / KW20 / Rd), this protein is Mu-like prophage FluMu protein gp29.